The sequence spans 528 residues: Glucose-6-phosphate isomerase (528 aa).

The active-site Proton donor is glutamate 322. Active-site residues include histidine 351 and lysine 455.

Belongs to the GPI family.

It localises to the cytoplasm. The catalysed reaction is alpha-D-glucose 6-phosphate = beta-D-fructose 6-phosphate. The protein operates within carbohydrate biosynthesis; gluconeogenesis. Its pathway is carbohydrate degradation; glycolysis; D-glyceraldehyde 3-phosphate and glycerone phosphate from D-glucose: step 2/4. Catalyzes the reversible isomerization of glucose-6-phosphate to fructose-6-phosphate. This is Glucose-6-phosphate isomerase from Nostoc sp. (strain PCC 7120 / SAG 25.82 / UTEX 2576).